We begin with the raw amino-acid sequence, 331 residues long: D-lactate dehydrogenase (331 aa).

NAD(+) contacts are provided by residues R156–I157, D176, M206–P207, T233–R235, and D259. Residue R235 is part of the active site. Residue E264 is part of the active site. The active-site Proton donor is the H296.

The protein belongs to the D-isomer specific 2-hydroxyacid dehydrogenase family.

The enzyme catalyses (R)-lactate + NAD(+) = pyruvate + NADH + H(+). In Treponema pallidum (strain Nichols), this protein is D-lactate dehydrogenase (ldhD).